The sequence spans 92 residues: Large ribosomal subunit protein eL31 (92 aa).

This sequence belongs to the eukaryotic ribosomal protein eL31 family.

The sequence is that of Large ribosomal subunit protein eL31 from Halobacterium salinarum (strain ATCC 29341 / DSM 671 / R1).